The chain runs to 636 residues: 1-deoxy-D-xylulose-5-phosphate synthase (636 aa).

Thiamine diphosphate contacts are provided by residues His-72 and 113–115; that span reads GHA. Asp-144 is a Mg(2+) binding site. Thiamine diphosphate is bound by residues 145–146, Asn-174, Tyr-287, and Glu-370; that span reads GA. Mg(2+) is bound at residue Asn-174.

The protein belongs to the transketolase family. DXPS subfamily. In terms of assembly, homodimer. It depends on Mg(2+) as a cofactor. Thiamine diphosphate is required as a cofactor.

It carries out the reaction D-glyceraldehyde 3-phosphate + pyruvate + H(+) = 1-deoxy-D-xylulose 5-phosphate + CO2. Its pathway is metabolic intermediate biosynthesis; 1-deoxy-D-xylulose 5-phosphate biosynthesis; 1-deoxy-D-xylulose 5-phosphate from D-glyceraldehyde 3-phosphate and pyruvate: step 1/1. Functionally, catalyzes the acyloin condensation reaction between C atoms 2 and 3 of pyruvate and glyceraldehyde 3-phosphate to yield 1-deoxy-D-xylulose-5-phosphate (DXP). This is 1-deoxy-D-xylulose-5-phosphate synthase from Crocosphaera subtropica (strain ATCC 51142 / BH68) (Cyanothece sp. (strain ATCC 51142)).